Here is a 494-residue protein sequence, read N- to C-terminus: MARTAFHDEFVDYYTILGAESTSSYVEIRQQYLKLVLRYHPDRNPGREAEVLPQFQLIQKAHEVLKDPKLRELFDQRRLLEAGRPDGVLRFRPKKSGPKNDISTKVASKVSVTMATKFAEKKKKQDRENVDSKDNNITNFSLHRSFSASGKMEKNNSFKEVSTSKSYISSGYLHPKTSPIFKKNGYATENVVDPISSSPRFKGPNYNKFNAKLYLESLREKRRTYTPLSEISNGLNSNGVENSSITKSSPRSSSSSNNERFKDTSEESIIFTSPNTPEHPSVYQTDITPEIKLEHSDNNSPSKPEIPFRHPTSKPLPPKPLSRSKSSSLSRNQTRSQLNDLSAENDSTSNSTEYDDQLQSILRSLAIEGDDDEVAKVLPKPPSVPTIQAPIPPEAPRNLTNASVDSYLNSFEMYQRRWSSYSIIYTQYAFQWQIFKNKCFQLDLMNTPGQSRLIDNWKEGSQAIQLFYAYEQMHLRALEELQSLKESLFASFGI.

Positions 12–78 (DYYTILGAES…KLRELFDQRR (67 aa)) constitute a J domain. Residues 229–242 (SEISNGLNSNGVEN) show a composition bias toward polar residues. Positions 229–354 (SEISNGLNSN…NDSTSNSTEY (126 aa)) are disordered. Positions 243–256 (SSITKSSPRSSSSS) are enriched in low complexity. The span at 270–287 (IFTSPNTPEHPSVYQTDI) shows a compositional bias: polar residues. A compositionally biased stretch (low complexity) spans 321 to 331 (LSRSKSSSLSR). The span at 332 to 354 (NQTRSQLNDLSAENDSTSNSTEY) shows a compositional bias: polar residues.

As to quaternary structure, interacts iwth ssa1.

The protein localises to the cytoplasm. It is found in the cytoskeleton. Its subcellular location is the nucleus. In terms of biological role, has a role in the proper organization of the interphase microtubule cytoskeleton. Required for equatorial microtubule organizing center (eMTOC) disassembly into satellites, contributing to the dynamic redistribution of MTOC components for organization of interphase microtubules. This is DnaJ-related protein rsp1 (rsp1) from Schizosaccharomyces pombe (strain 972 / ATCC 24843) (Fission yeast).